Here is a 512-residue protein sequence, read N- to C-terminus: Histidine ammonia-lyase (512 aa).

Positions 142 to 144 form a cross-link, 5-imidazolinone (Ala-Gly); the sequence is ASG. The residue at position 143 (S143) is a 2,3-didehydroalanine (Ser).

Belongs to the PAL/histidase family. Contains an active site 4-methylidene-imidazol-5-one (MIO), which is formed autocatalytically by cyclization and dehydration of residues Ala-Ser-Gly.

It localises to the cytoplasm. It carries out the reaction L-histidine = trans-urocanate + NH4(+). It participates in amino-acid degradation; L-histidine degradation into L-glutamate; N-formimidoyl-L-glutamate from L-histidine: step 1/3. This Allorhizobium ampelinum (strain ATCC BAA-846 / DSM 112012 / S4) (Agrobacterium vitis (strain S4)) protein is Histidine ammonia-lyase.